The sequence spans 277 residues: F420-dependent methylenetetrahydromethanopterin dehydrogenase (277 aa).

It belongs to the MTD family.

The catalysed reaction is 5,10-methylenetetrahydromethanopterin + oxidized coenzyme F420-(gamma-L-Glu)(n) + 2 H(+) = 5,10-methenyl-5,6,7,8-tetrahydromethanopterin + reduced coenzyme F420-(gamma-L-Glu)(n). It participates in one-carbon metabolism; methanogenesis from CO(2); 5,10-methylene-5,6,7,8-tetrahydromethanopterin from 5,10-methenyl-5,6,7,8-tetrahydromethanopterin (coenzyme F420 route): step 1/1. Its function is as follows. Catalyzes the reversible reduction of methenyl-H(4)MPT(+) to methylene-H(4)MPT. The chain is F420-dependent methylenetetrahydromethanopterin dehydrogenase from Methanococcus maripaludis (strain DSM 14266 / JCM 13030 / NBRC 101832 / S2 / LL).